The sequence spans 510 residues: Maturase K (510 aa).

The protein belongs to the intron maturase 2 family. MatK subfamily.

It is found in the plastid. The protein localises to the chloroplast. Its function is as follows. Usually encoded in the trnK tRNA gene intron. Probably assists in splicing its own and other chloroplast group II introns. The sequence is that of Maturase K from Anomochloa marantoidea (Herbaceous bamboo).